The primary structure comprises 281 residues: 4-diphosphocytidyl-2-C-methyl-D-erythritol kinase (281 aa).

Lysine 15 is an active-site residue. An ATP-binding site is contributed by 98 to 108 (PTGAGLGGGSS). Aspartate 140 is an active-site residue.

Belongs to the GHMP kinase family. IspE subfamily.

It catalyses the reaction 4-CDP-2-C-methyl-D-erythritol + ATP = 4-CDP-2-C-methyl-D-erythritol 2-phosphate + ADP + H(+). Its pathway is isoprenoid biosynthesis; isopentenyl diphosphate biosynthesis via DXP pathway; isopentenyl diphosphate from 1-deoxy-D-xylulose 5-phosphate: step 3/6. Functionally, catalyzes the phosphorylation of the position 2 hydroxy group of 4-diphosphocytidyl-2C-methyl-D-erythritol. The chain is 4-diphosphocytidyl-2-C-methyl-D-erythritol kinase from Neisseria meningitidis serogroup A / serotype 4A (strain DSM 15465 / Z2491).